A 1379-amino-acid chain; its full sequence is DNA-directed RNA polymerase subunit beta (1379 aa).

The protein belongs to the RNA polymerase beta chain family. The RNAP catalytic core consists of 2 alpha, 1 beta, 1 beta' and 1 omega subunit. When a sigma factor is associated with the core the holoenzyme is formed, which can initiate transcription.

It carries out the reaction RNA(n) + a ribonucleoside 5'-triphosphate = RNA(n+1) + diphosphate. Its function is as follows. DNA-dependent RNA polymerase catalyzes the transcription of DNA into RNA using the four ribonucleoside triphosphates as substrates. In Campylobacter fetus subsp. fetus (strain 82-40), this protein is DNA-directed RNA polymerase subunit beta.